Here is a 601-residue protein sequence, read N- to C-terminus: Probable HECT-type ubiquitin ligase-interacting protein creD (601 aa).

Disordered regions lie at residues 374–397 and 454–496; these read EVDP…GTLS and VSTD…GMAT. The segment covering 455–473 has biased composition (low complexity); sequence STDSFGPSSGSNSQSPASP. Residues 475–489 are compositionally biased toward basic and acidic residues; the sequence is LSRRPSDEGYHDHDY.

This sequence belongs to the arrestin family. As to quaternary structure, interacts with hulA.

Component of the regulatory network controlling carbon source utilization through ubiquitination and deubiquitination involving creA, creB, creC, creD and acrB. May be involved in signaling by recognizing appropriately phosphorylated substrates via its arrestin domains and then recruit a HECT-type ubiquitin ligase such as hulA, leading to ubiquitination of the substrate, providing a link between ubiquitination and phosphorylation in protein regulation and stability. This Aspergillus fumigatus (strain CBS 144.89 / FGSC A1163 / CEA10) (Neosartorya fumigata) protein is Probable HECT-type ubiquitin ligase-interacting protein creD (creD).